The sequence spans 502 residues: MPLVKRNIEPRHLCRGALPEGITSELECVTNSTLAAIIRQLSSLSKHAEDIFGELFNEANNFYIRANSLQDRIDRLAVKVTQLDSTVEEVSLQDINMKKAFKSSTVQDQQVVSKNSIPNPVADIYNQSDKPPPLNILTPYRDDKKDGLKFYTDPSYFFDLWKEKMLQDTEDKRKEKRRQKEQKRIDGTTREVKKVRKARNRRQEWNMMAYDKELRPDNRLSQSVYHGASSEGSLSPDTRSHASDVTDYSYPATPNHSLHPQPVTPSYAAGDVPPHGPASQAAEHEYRPPSASARHMALNRPQQPPPPPPPQAPEGSQASAPMAPADYGMLPAQIIEYYNPSGPPPPPPPPVIPSAQTAFVSPLQMPMQPPFPASASSTHAAPPHPPSTGLLVTAPPPPGPPPPPPGPPGPGSSLSSSPMHGPPVAEAKRQEPAQPPISDARSDLLAAIRMGIQLKKVQEQREQEAKREPVGNDVATILSRRIAVEYSDSDDDSEFDENDWSD.

A coiled-coil region spans residues 57 to 93 (NEANNFYIRANSLQDRIDRLAVKVTQLDSTVEEVSLQ). The residue at position 151 (Tyr-151) is a Phosphotyrosine; by ABL1. The stretch at 162–206 (KEKMLQDTEDKRKEKRRQKEQKRIDGTTREVKKVRKARNRRQEWN) forms a coiled coil. Disordered stretches follow at residues 169–210 (TEDK…MMAY) and 223–443 (SVYH…ARSD). The span at 182–192 (QKRIDGTTREV) shows a compositional bias: basic and acidic residues. Residues 223–237 (SVYHGASSEGSLSPD) are compositionally biased toward polar residues. At Tyr-248 the chain carries Phosphotyrosine; by ABL1. The span at 302-312 (QQPPPPPPPQA) shows a compositional bias: pro residues. Tyr-337 is subject to Phosphotyrosine; by ABL1. Pro residues-rich tracts occupy residues 341-352 (SGPPPPPPPPVI) and 394-410 (APPP…PPGP). A compositionally biased stretch (low complexity) spans 411-423 (GSSLSSSPMHGPP). A WH2 domain is found at 440–457 (ARSDLLAAIRMGIQLKKV). Position 486 is a phosphotyrosine; by ABL1 (Tyr-486).

The protein belongs to the SCAR/WAVE family. As to quaternary structure, binds actin and the Arp2/3 complex. Phosphorylation by ABL1 promotes lamellipodia formation and cell migration. In terms of tissue distribution, expressed in ovary and brain.

The protein localises to the cytoplasm. The protein resides in the cytoskeleton. Downstream effector molecules involved in the transmission of signals from tyrosine kinase receptors and small GTPases to the actin cytoskeleton. Plays a role in the regulation of cell morphology and cytoskeletal organization. Required in the control of cell shape. The sequence is that of Actin-binding protein WASF3 (WASF3) from Homo sapiens (Human).